A 69-amino-acid chain; its full sequence is ATP synthase F(0) complex subunit 8 (69 aa).

The helical transmembrane segment at Thr-8–Tyr-24 threads the bilayer. Lys-55 bears the N6-acetyllysine; alternate mark. The residue at position 55 (Lys-55) is an N6-succinyllysine; alternate. At Lys-58 the chain carries N6-acetyllysine.

It belongs to the ATPase protein 8 family. In terms of assembly, component of the ATP synthase complex composed at least of ATP5F1A/subunit alpha, ATP5F1B/subunit beta, ATP5MC1/subunit c (homooctomer), MT-ATP6/subunit a, MT-ATP8/subunit 8, ATP5ME/subunit e, ATP5MF/subunit f, ATP5MG/subunit g, ATP5MK/subunit k, ATP5MJ/subunit j, ATP5F1C/subunit gamma, ATP5F1D/subunit delta, ATP5F1E/subunit epsilon, ATP5PF/subunit F6, ATP5PB/subunit b, ATP5PD/subunit d, ATP5PO/subunit OSCP. ATP synthase complex consists of a soluble F(1) head domain (subunits alpha(3) and beta(3)) - the catalytic core - and a membrane F(0) domain - the membrane proton channel (subunits c, a, 8, e, f, g, k and j). These two domains are linked by a central stalk (subunits gamma, delta, and epsilon) rotating inside the F1 region and a stationary peripheral stalk (subunits F6, b, d, and OSCP). Interacts with PRICKLE3.

The protein localises to the mitochondrion membrane. Its function is as follows. Subunit 8, of the mitochondrial membrane ATP synthase complex (F(1)F(0) ATP synthase or Complex V) that produces ATP from ADP in the presence of a proton gradient across the membrane which is generated by electron transport complexes of the respiratory chain. ATP synthase complex consist of a soluble F(1) head domain - the catalytic core - and a membrane F(1) domain - the membrane proton channel. These two domains are linked by a central stalk rotating inside the F(1) region and a stationary peripheral stalk. During catalysis, ATP synthesis in the catalytic domain of F(1) is coupled via a rotary mechanism of the central stalk subunits to proton translocation. In vivo, can only synthesize ATP although its ATP hydrolase activity can be activated artificially in vitro. Part of the complex F(0) domain. The protein is ATP synthase F(0) complex subunit 8 of Osphranter robustus (Wallaroo).